Consider the following 124-residue polypeptide: Fluoride-specific ion channel FluC (124 aa).

4 helical membrane passes run 5 to 25, 32 to 52, 67 to 87, and 96 to 116; these read VYIA…SGFV, SFPY…GLIM, FAIT…SFET, and LLIA…CTWI. The Na(+) site is built by G75 and T78.

The protein belongs to the fluoride channel Fluc/FEX (TC 1.A.43) family.

The protein resides in the cell inner membrane. It catalyses the reaction fluoride(in) = fluoride(out). Its activity is regulated as follows. Na(+) is not transported, but it plays an essential structural role and its presence is essential for fluoride channel function. In terms of biological role, fluoride-specific ion channel. Important for reducing fluoride concentration in the cell, thus reducing its toxicity. The chain is Fluoride-specific ion channel FluC from Citrifermentans bemidjiense (strain ATCC BAA-1014 / DSM 16622 / JCM 12645 / Bem) (Geobacter bemidjiensis).